Reading from the N-terminus, the 418-residue chain is Dihydrofolate synthase/folylpolyglutamate synthase (418 aa).

Gly53–Thr56 serves as a coordination point for ATP. A Mg(2+)-binding site is contributed by Ser77. Residue Thr116–Glu119 participates in 7,8-dihydropteroate binding. Glu140 is a binding site for Mg(2+). Residue Leu147–Ala149 participates in 7,8-dihydropteroate binding. A Mg(2+)-binding site is contributed by His167. Asn252, Arg284, and Asp297 together coordinate ATP.

This sequence belongs to the folylpolyglutamate synthase family. In terms of assembly, monomer. Mg(2+) is required as a cofactor.

The catalysed reaction is 7,8-dihydropteroate + L-glutamate + ATP = 7,8-dihydrofolate + ADP + phosphate + H(+). It catalyses the reaction (6S)-5,6,7,8-tetrahydrofolyl-(gamma-L-Glu)(n) + L-glutamate + ATP = (6S)-5,6,7,8-tetrahydrofolyl-(gamma-L-Glu)(n+1) + ADP + phosphate + H(+). The enzyme catalyses 10-formyltetrahydrofolyl-(gamma-L-Glu)(n) + L-glutamate + ATP = 10-formyltetrahydrofolyl-(gamma-L-Glu)(n+1) + ADP + phosphate + H(+). It carries out the reaction (6R)-5,10-methylenetetrahydrofolyl-(gamma-L-Glu)(n) + L-glutamate + ATP = (6R)-5,10-methylenetetrahydrofolyl-(gamma-L-Glu)(n+1) + ADP + phosphate + H(+). It participates in cofactor biosynthesis; tetrahydrofolate biosynthesis; 7,8-dihydrofolate from 2-amino-4-hydroxy-6-hydroxymethyl-7,8-dihydropteridine diphosphate and 4-aminobenzoate: step 2/2. Its pathway is cofactor biosynthesis; tetrahydrofolylpolyglutamate biosynthesis. Functions in two distinct reactions of the de novo folate biosynthetic pathway. Catalyzes the addition of a glutamate residue to dihydropteroate (7,8-dihydropteroate or H2Pte) to form dihydrofolate (7,8-dihydrofolate monoglutamate or H2Pte-Glu). Also catalyzes successive additions of L-glutamate to tetrahydrofolate or 10-formyltetrahydrofolate or 5,10-methylenetetrahydrofolate, leading to folylpolyglutamate derivatives. In Buchnera aphidicola subsp. Schizaphis graminum (strain Sg), this protein is Dihydrofolate synthase/folylpolyglutamate synthase (folC).